The sequence spans 349 residues: C-X-C chemokine receptor type 1 (349 aa).

The Extracellular portion of the chain corresponds to 1–44 (MAEAEYFIWIAPEGDFEEEFGNITRMLPTGEYFSPCKRVPMTNR). An N-linked (GlcNAc...) asparagine glycan is attached at N22. Residues 45 to 71 (QAVVVFYALVFLLSLLGNSLVMLVILY) form a helical membrane-spanning segment. Residues 72–80 (RRRTRSVTD) lie on the Cytoplasmic side of the membrane. A helical membrane pass occupies residues 81–101 (VYVLNLAIADLLFSLTLPFLA). The Extracellular portion of the chain corresponds to 102 to 116 (VSKWKGWIFGTPLCK). Residues C115 and C192 are joined by a disulfide bond. The chain crosses the membrane as a helical span at residues 117-138 (MVSLLKEVNFFSGILLLACISV). Residues 139–159 (DRYLAIVHATRTLTRKRYLVK) lie on the Cytoplasmic side of the membrane. The chain crosses the membrane as a helical span at residues 160-179 (FVCMGTWGLSLVLSLPFAIF). Residues 180–204 (RQAYKPYRSGTVCYEVLGEATADLR) lie on the Extracellular side of the membrane. Residues 205 to 225 (ITLRGLSHIFGFLLPLFIMLV) traverse the membrane as a helical segment. The Cytoplasmic portion of the chain corresponds to 226–247 (CYGLTLRTLFKAHMRQKRRAMW). The helical transmembrane segment at 248-269 (VIFAVVLVFLLCCLPYNLVLLS) threads the bilayer. Residues 270-290 (DTLLGAHLIQDTCERRNNIDQ) are Extracellular-facing. The chain crosses the membrane as a helical span at residues 291-313 (ALYITEILGFSHSCLNPVIYAFV). Topologically, residues 314-349 (GQSFRHEFLKILANLVHKEVLTHHSASFRTSLTTIY) are cytoplasmic.

The protein belongs to the G-protein coupled receptor 1 family. In terms of assembly, interacts with IL8. Interacts with GNAI2.

The protein localises to the cell membrane. Receptor to interleukin-8, which is a powerful neutrophils chemotactic factor. Binding of IL-8 to the receptor causes activation of neutrophils. This response is mediated via a G-protein that activates a phosphatidylinositol-calcium second messenger system. The protein is C-X-C chemokine receptor type 1 (Cxcr1) of Rattus norvegicus (Rat).